The primary structure comprises 146 residues: Holo-[acyl-carrier-protein] synthase (146 aa).

Positions 9 and 58 each coordinate Mg(2+).

The protein belongs to the P-Pant transferase superfamily. AcpS family. The cofactor is Mg(2+).

The protein resides in the cytoplasm. The enzyme catalyses apo-[ACP] + CoA = holo-[ACP] + adenosine 3',5'-bisphosphate + H(+). Functionally, transfers the 4'-phosphopantetheine moiety from coenzyme A to a Ser of acyl-carrier-protein. The sequence is that of Holo-[acyl-carrier-protein] synthase from Baumannia cicadellinicola subsp. Homalodisca coagulata.